Here is a 53-residue protein sequence, read N- to C-terminus: UPF0391 membrane protein Meso_3392 (53 aa).

Transmembrane regions (helical) follow at residues 4–24 and 33–53; these read WILI…HSLA and ILIA…IAIA.

Belongs to the UPF0391 family.

The protein resides in the cell membrane. This is UPF0391 membrane protein Meso_3392 from Chelativorans sp. (strain BNC1).